Consider the following 278-residue polypeptide: tRNA (guanine-N(7)-)-methyltransferase (278 aa).

Residues Gly95, 118–119 (EI), 153–154 (NA), and Cys173 contribute to the S-adenosyl-L-methionine site. The active site involves Asp176. Position 251-253 (251-253 (TEE)) interacts with S-adenosyl-L-methionine.

It belongs to the class I-like SAM-binding methyltransferase superfamily. TrmB family. In terms of assembly, forms a complex with TRM82.

It localises to the nucleus. The catalysed reaction is guanosine(46) in tRNA + S-adenosyl-L-methionine = N(7)-methylguanosine(46) in tRNA + S-adenosyl-L-homocysteine. It functions in the pathway tRNA modification; N(7)-methylguanine-tRNA biosynthesis. Its function is as follows. Catalyzes the formation of N(7)-methylguanine at position 46 (m7G46) in tRNA. This chain is tRNA (guanine-N(7)-)-methyltransferase, found in Kluyveromyces lactis (strain ATCC 8585 / CBS 2359 / DSM 70799 / NBRC 1267 / NRRL Y-1140 / WM37) (Yeast).